The sequence spans 35 residues: Basic endochitinase CH1 (35 aa).

It belongs to the glycosyl hydrolase 19 family. Chitinase class I subfamily.

It carries out the reaction Random endo-hydrolysis of N-acetyl-beta-D-glucosaminide (1-&gt;4)-beta-linkages in chitin and chitodextrins.. Defense against chitin-containing fungal pathogens. The chain is Basic endochitinase CH1 from Castanea sativa (Sweet chestnut).